The chain runs to 397 residues: MSIAAIILAAGRGSRAGSLQNGPKQYRFLGREPVICHTIRCFLQHPAITNIILVIHPDDYQICANAIADLKDHLTIIEGGETRQISTLQGLRALKNVKPNYVHIHDGARPFIGNELLEQIHTSINHKEGILPVLSVSDTLKYVSNTHHVLETIPRTNLYRAQTPQCFPFELILAAHEKAMQSHKQDFTDDSAIAEWFGIPIRTIPGDPNNIKITWPADLETARSYLLKGMQIFPDIRTGNGYDVHSFEDGHYITLCGIKIPFEKKLNGHSDADVALHALTDALLATQGAGDIGTHFPPSDPQWKNASSEIFLHHAIEIIKKAEGRIANVDITLIAEKPKIGPYRHIMTENLMKILKISTDRISIKATTNEKLGFIGREEGIAALATATVIYPGEIPK.

Residues 1-236 (MSIAAIILAA…LKGMQIFPDI (236 aa)) are 2-C-methyl-D-erythritol 4-phosphate cytidylyltransferase. The segment at 237–397 (RTGNGYDVHS…TVIYPGEIPK (161 aa)) is 2-C-methyl-D-erythritol 2,4-cyclodiphosphate synthase. 2 residues coordinate a divalent metal cation: D243 and H245. 4-CDP-2-C-methyl-D-erythritol 2-phosphate contacts are provided by residues 243–245 (DVH) and 269–270 (HS). Residue H277 coordinates a divalent metal cation. 4-CDP-2-C-methyl-D-erythritol 2-phosphate is bound by residues 291–293 (DIG), 367–370 (TTNE), F374, and R377.

In the N-terminal section; belongs to the IspD/TarI cytidylyltransferase family. IspD subfamily. It in the C-terminal section; belongs to the IspF family. It depends on a divalent metal cation as a cofactor.

It catalyses the reaction 2-C-methyl-D-erythritol 4-phosphate + CTP + H(+) = 4-CDP-2-C-methyl-D-erythritol + diphosphate. The enzyme catalyses 4-CDP-2-C-methyl-D-erythritol 2-phosphate = 2-C-methyl-D-erythritol 2,4-cyclic diphosphate + CMP. It functions in the pathway isoprenoid biosynthesis; isopentenyl diphosphate biosynthesis via DXP pathway; isopentenyl diphosphate from 1-deoxy-D-xylulose 5-phosphate: step 2/6. The protein operates within isoprenoid biosynthesis; isopentenyl diphosphate biosynthesis via DXP pathway; isopentenyl diphosphate from 1-deoxy-D-xylulose 5-phosphate: step 4/6. Its function is as follows. Bifunctional enzyme that catalyzes the formation of 4-diphosphocytidyl-2-C-methyl-D-erythritol from CTP and 2-C-methyl-D-erythritol 4-phosphate (MEP) (IspD), and catalyzes the conversion of 4-diphosphocytidyl-2-C-methyl-D-erythritol 2-phosphate (CDP-ME2P) to 2-C-methyl-D-erythritol 2,4-cyclodiphosphate (ME-CPP) with a corresponding release of cytidine 5-monophosphate (CMP) (IspF). This is Bifunctional enzyme IspD/IspF from Bartonella bacilliformis (strain ATCC 35685 / KC583 / Herrer 020/F12,63).